Here is a 267-residue protein sequence, read N- to C-terminus: MNEQYQHRARKRFGQNFLHDAGIIDRILRAINAKAGEHLLEIGPGQGALTEGLLGSGAQLDVVELDKDLVPILQHKFADRSNFRLHQGDALKFDFNQLGVPPRSLKVVGNLPYNISTPLIFHLLSHAGLIRDMHFMLQKEVVERMAAGPGGGDWGRLSIMVQYHCRVEHLFNVGPGAFNPPPKVDSAIVRLVPHEVLPFPAKDHLLLERVVREAFNQRRKTLRNTMKGLLDSAAIEAAGVDGSLRPEQLDLAAFVRLADQLADQQQA.

Positions 16, 18, 43, 64, 89, and 110 each coordinate S-adenosyl-L-methionine.

The protein belongs to the class I-like SAM-binding methyltransferase superfamily. rRNA adenine N(6)-methyltransferase family. RsmA subfamily.

The protein localises to the cytoplasm. The catalysed reaction is adenosine(1518)/adenosine(1519) in 16S rRNA + 4 S-adenosyl-L-methionine = N(6)-dimethyladenosine(1518)/N(6)-dimethyladenosine(1519) in 16S rRNA + 4 S-adenosyl-L-homocysteine + 4 H(+). Its function is as follows. Specifically dimethylates two adjacent adenosines (A1518 and A1519) in the loop of a conserved hairpin near the 3'-end of 16S rRNA in the 30S particle. May play a critical role in biogenesis of 30S subunits. This Pseudomonas putida (strain ATCC 47054 / DSM 6125 / CFBP 8728 / NCIMB 11950 / KT2440) protein is Ribosomal RNA small subunit methyltransferase A.